Reading from the N-terminus, the 203-residue chain is ATP-dependent Clp protease proteolytic subunit 1 (203 aa).

Ser101 serves as the catalytic Nucleophile. His126 is a catalytic residue.

It belongs to the peptidase S14 family. As to quaternary structure, fourteen ClpP subunits assemble into 2 heptameric rings which stack back to back to give a disk-like structure with a central cavity, resembling the structure of eukaryotic proteasomes.

It localises to the cytoplasm. It catalyses the reaction Hydrolysis of proteins to small peptides in the presence of ATP and magnesium. alpha-casein is the usual test substrate. In the absence of ATP, only oligopeptides shorter than five residues are hydrolyzed (such as succinyl-Leu-Tyr-|-NHMec, and Leu-Tyr-Leu-|-Tyr-Trp, in which cleavage of the -Tyr-|-Leu- and -Tyr-|-Trp bonds also occurs).. Cleaves peptides in various proteins in a process that requires ATP hydrolysis. Has a chymotrypsin-like activity. Plays a major role in the degradation of misfolded proteins. The protein is ATP-dependent Clp protease proteolytic subunit 1 of Synechococcus sp. (strain JA-2-3B'a(2-13)) (Cyanobacteria bacterium Yellowstone B-Prime).